We begin with the raw amino-acid sequence, 411 residues long: LL-diaminopimelate aminotransferase (411 aa).

Positions 15 and 42 each coordinate substrate. Pyridoxal 5'-phosphate contacts are provided by residues tyrosine 72, 108 to 109 (SK), tyrosine 132, asparagine 187, tyrosine 218, and 246 to 248 (SFS). Substrate is bound by residues lysine 109, tyrosine 132, and asparagine 187. The residue at position 249 (lysine 249) is an N6-(pyridoxal phosphate)lysine. The pyridoxal 5'-phosphate site is built by arginine 257 and asparagine 292. Residues asparagine 292 and arginine 388 each coordinate substrate.

Belongs to the class-I pyridoxal-phosphate-dependent aminotransferase family. LL-diaminopimelate aminotransferase subfamily. Homodimer. Pyridoxal 5'-phosphate serves as cofactor.

The enzyme catalyses (2S,6S)-2,6-diaminopimelate + 2-oxoglutarate = (S)-2,3,4,5-tetrahydrodipicolinate + L-glutamate + H2O + H(+). It functions in the pathway amino-acid biosynthesis; L-lysine biosynthesis via DAP pathway; LL-2,6-diaminopimelate from (S)-tetrahydrodipicolinate (aminotransferase route): step 1/1. Functionally, involved in the synthesis of meso-diaminopimelate (m-DAP or DL-DAP), required for both lysine and peptidoglycan biosynthesis. Catalyzes the direct conversion of tetrahydrodipicolinate to LL-diaminopimelate. The protein is LL-diaminopimelate aminotransferase of Nostoc punctiforme (strain ATCC 29133 / PCC 73102).